Reading from the N-terminus, the 282-residue chain is 2-dehydro-3-deoxyphosphooctonate aldolase (282 aa).

Belongs to the KdsA family.

Its subcellular location is the cytoplasm. The enzyme catalyses D-arabinose 5-phosphate + phosphoenolpyruvate + H2O = 3-deoxy-alpha-D-manno-2-octulosonate-8-phosphate + phosphate. The protein operates within carbohydrate biosynthesis; 3-deoxy-D-manno-octulosonate biosynthesis; 3-deoxy-D-manno-octulosonate from D-ribulose 5-phosphate: step 2/3. It functions in the pathway bacterial outer membrane biogenesis; lipopolysaccharide biosynthesis. The protein is 2-dehydro-3-deoxyphosphooctonate aldolase of Shewanella halifaxensis (strain HAW-EB4).